A 286-amino-acid polypeptide reads, in one-letter code: Phosphatidylserine decarboxylase proenzyme (286 aa).

Catalysis depends on charge relay system; for autoendoproteolytic cleavage activity residues Asp-89, His-146, and Ser-252. The active-site Schiff-base intermediate with substrate; via pyruvic acid; for decarboxylase activity is Ser-252. Pyruvic acid (Ser); by autocatalysis is present on Ser-252.

The protein belongs to the phosphatidylserine decarboxylase family. PSD-B subfamily. Prokaryotic type I sub-subfamily. In terms of assembly, heterodimer of a large membrane-associated beta subunit and a small pyruvoyl-containing alpha subunit. Requires pyruvate as cofactor. In terms of processing, is synthesized initially as an inactive proenzyme. Formation of the active enzyme involves a self-maturation process in which the active site pyruvoyl group is generated from an internal serine residue via an autocatalytic post-translational modification. Two non-identical subunits are generated from the proenzyme in this reaction, and the pyruvate is formed at the N-terminus of the alpha chain, which is derived from the carboxyl end of the proenzyme. The autoendoproteolytic cleavage occurs by a canonical serine protease mechanism, in which the side chain hydroxyl group of the serine supplies its oxygen atom to form the C-terminus of the beta chain, while the remainder of the serine residue undergoes an oxidative deamination to produce ammonia and the pyruvoyl prosthetic group on the alpha chain. During this reaction, the Ser that is part of the protease active site of the proenzyme becomes the pyruvoyl prosthetic group, which constitutes an essential element of the active site of the mature decarboxylase.

The protein resides in the cell membrane. The catalysed reaction is a 1,2-diacyl-sn-glycero-3-phospho-L-serine + H(+) = a 1,2-diacyl-sn-glycero-3-phosphoethanolamine + CO2. It functions in the pathway phospholipid metabolism; phosphatidylethanolamine biosynthesis; phosphatidylethanolamine from CDP-diacylglycerol: step 2/2. In terms of biological role, catalyzes the formation of phosphatidylethanolamine (PtdEtn) from phosphatidylserine (PtdSer). The protein is Phosphatidylserine decarboxylase proenzyme of Shewanella loihica (strain ATCC BAA-1088 / PV-4).